We begin with the raw amino-acid sequence, 621 residues long: Glutamyl-tRNA(Gln) amidotransferase subunit E (621 aa).

This sequence belongs to the GatB/GatE family. GatE subfamily. As to quaternary structure, heterodimer of GatD and GatE.

It carries out the reaction L-glutamyl-tRNA(Gln) + L-glutamine + ATP + H2O = L-glutaminyl-tRNA(Gln) + L-glutamate + ADP + phosphate + H(+). Functionally, allows the formation of correctly charged Gln-tRNA(Gln) through the transamidation of misacylated Glu-tRNA(Gln) in organisms which lack glutaminyl-tRNA synthetase. The reaction takes place in the presence of glutamine and ATP through an activated gamma-phospho-Glu-tRNA(Gln). The GatDE system is specific for glutamate and does not act on aspartate. The polypeptide is Glutamyl-tRNA(Gln) amidotransferase subunit E (Methanobrevibacter smithii (strain ATCC 35061 / DSM 861 / OCM 144 / PS)).